Here is a 417-residue protein sequence, read N- to C-terminus: MRDDQIFNLIEKEKLREREHIELIASENFTSLEIRQAVGSILTNKYAEGYPLNRYYGGCSFIDEIETLAISRAKELFGAKYANVQPHSGSQANMAAIMALISPGDRILGMQLSHGGHLTHGSRVNFSGIFFNTYFYGVSRDSELIDYDEVLKIAKDCRPNLIIAGASSYSREIDFKKFREIADDVSAYLLCDIAHIAGLIVAGFHNSSIDVAHLTTSTTHKTLRGPRGGIILSGKDFDKLVNFNGKEKPLFNAVNSTVFPGTQGGPLVHVIAGKAIAFKEALQESFKEYIANVIKNTKVMAEYFKSEGFRIVSGGTDNHLFLVDLSSSDLTGADAEKLLESVNITLNKNAIPFDKKSPSLASGIRIGGAAITSRGLNESDSLNVAKFIVRALKAKSDIELKQIKKEVVRFIRDFDMP.

Residues L112 and 116–118 (GHL) contribute to the (6S)-5,6,7,8-tetrahydrofolate site. K221 carries the post-translational modification N6-(pyridoxal phosphate)lysine. E247 is a binding site for (6S)-5,6,7,8-tetrahydrofolate.

The protein belongs to the SHMT family. As to quaternary structure, homodimer. The cofactor is pyridoxal 5'-phosphate.

The protein localises to the cytoplasm. It carries out the reaction (6R)-5,10-methylene-5,6,7,8-tetrahydrofolate + glycine + H2O = (6S)-5,6,7,8-tetrahydrofolate + L-serine. The protein operates within one-carbon metabolism; tetrahydrofolate interconversion. Its pathway is amino-acid biosynthesis; glycine biosynthesis; glycine from L-serine: step 1/1. Its function is as follows. Catalyzes the reversible interconversion of serine and glycine with tetrahydrofolate (THF) serving as the one-carbon carrier. This reaction serves as the major source of one-carbon groups required for the biosynthesis of purines, thymidylate, methionine, and other important biomolecules. Also exhibits THF-independent aldolase activity toward beta-hydroxyamino acids, producing glycine and aldehydes, via a retro-aldol mechanism. This is Serine hydroxymethyltransferase from Borreliella burgdorferi (strain ATCC 35210 / DSM 4680 / CIP 102532 / B31) (Borrelia burgdorferi).